Here is a 520-residue protein sequence, read N- to C-terminus: Vacuolar protein sorting-associated protein 9A (520 aa).

The VPS9 domain occupies 102-246 (VIADEKLFQK…ISNIDAKSIS (145 aa)). GTP-binding residues include Asn180 and Asp185. Disordered stretches follow at residues 267–331 (DSQT…AESI), 396–433 (LAPS…ETDR), and 464–520 (LVEG…EASE). Residues 287–323 (LQKTQSLNPKRENTLFQSKSSDSLSGTNELLNINSET) show a composition bias toward polar residues. At Ser330 the chain carries Phosphoserine. Over residues 396-407 (LAPSSSPLQASS) the composition is skewed to low complexity. 2 stretches are compositionally biased toward basic and acidic residues: residues 413–433 (KESE…ETDR) and 464–497 (LVEG…REGD).

As to quaternary structure, homodimer. The homodimer interacts with RABF2B. Interacts with RABF1 and RABF2A. In terms of tissue distribution, widely expressed.

Its function is as follows. Functions as a guanine nucleotide exchange factor (GEF) for Rab small GTPases. Activates specifically RABF1, RABF2A and RABF2B proteins. Required for early stages of embryogenesis, cytokinesis, embryogenesis, and organ development. Is essential for the establishment or maintenance of the polar localization of the auxin efflux carrier PIN1. This chain is Vacuolar protein sorting-associated protein 9A, found in Arabidopsis thaliana (Mouse-ear cress).